The sequence spans 351 residues: Nicotinate-nucleotide--dimethylbenzimidazole phosphoribosyltransferase (351 aa).

Glu317 acts as the Proton acceptor in catalysis.

It belongs to the CobT family.

It carries out the reaction 5,6-dimethylbenzimidazole + nicotinate beta-D-ribonucleotide = alpha-ribazole 5'-phosphate + nicotinate + H(+). It participates in nucleoside biosynthesis; alpha-ribazole biosynthesis; alpha-ribazole from 5,6-dimethylbenzimidazole: step 1/2. Its function is as follows. Catalyzes the synthesis of alpha-ribazole-5'-phosphate from nicotinate mononucleotide (NAMN) and 5,6-dimethylbenzimidazole (DMB). The polypeptide is Nicotinate-nucleotide--dimethylbenzimidazole phosphoribosyltransferase (Pseudomonas fluorescens (strain ATCC BAA-477 / NRRL B-23932 / Pf-5)).